The primary structure comprises 363 residues: Protein Wnt-5b (363 aa).

Residues methionine 1 to serine 21 form the signal peptide. The cysteines at positions 87 and 98 are disulfide-linked. Asparagine 97 and asparagine 103 each carry an N-linked (GlcNAc...) asparagine glycan. 10 disulfide bridges follow: cysteine 137–cysteine 145, cysteine 147–cysteine 165, cysteine 221–cysteine 235, cysteine 223–cysteine 230, cysteine 292–cysteine 323, cysteine 308–cysteine 318, cysteine 322–cysteine 362, cysteine 338–cysteine 353, cysteine 340–cysteine 350, and cysteine 345–cysteine 346. A lipid anchor (O-palmitoleoyl serine; by PORCN) is attached at serine 227. N-linked (GlcNAc...) asparagine glycosylation is found at asparagine 295 and asparagine 309.

It belongs to the Wnt family. Palmitoleoylation is required for efficient binding to frizzled receptors. Depalmitoleoylation leads to Wnt signaling pathway inhibition.

The protein resides in the secreted. The protein localises to the extracellular space. It localises to the extracellular matrix. Its function is as follows. Ligand for members of the frizzled family of seven transmembrane receptors. Can activate or inhibit canonical Wnt signaling, depending on receptor context. Required during embryogenesis for extension of the primary anterior-posterior axis. Regulates convergent extension movements and hypaxial myogenesis during gastrulation via activation of non-canonical Wnt signaling. The sequence is that of Protein Wnt-5b (wnt5b) from Danio rerio (Zebrafish).